Here is a 45-residue protein sequence, read N- to C-terminus: Gene 78 protein (45 aa).

A compositionally biased stretch (basic and acidic residues) spans 1–14 (MKKMSDQLKARLEL). The segment at 1-45 (MKKMSDQLKARLELRLSNAAQPHRNRKREMKRPGKGNRNNWKKEY) is disordered. Over residues 23 to 35 (HRNRKREMKRPGK) the composition is skewed to basic residues.

The sequence is that of Gene 78 protein (78) from Mycobacterium phage L5 (Mycobacteriophage L5).